A 597-amino-acid chain; its full sequence is DDB1- and CUL4-associated factor 8 (597 aa).

The span at 1–24 shows a compositional bias: polar residues; it reads MSSKGSSTDGRTDLANGSLSSSPE. The disordered stretch occupies residues 1-147; that stretch reads MSSKGSSTDG…DWVSSETSAL (147 aa). A phosphoserine mark is found at Ser-21 and Ser-22. A Nuclear export signal motif is present at residues 39–50; that stretch reads IEVEASDLSLSL. The span at 65 to 99 shows a compositional bias: basic and acidic residues; that stretch reads RGTDTESSGEDKDSDSMEDTGHYSINDENRVHDRS. Residue Ser-99 is modified to Phosphoserine. A compositionally biased stretch (acidic residues) spans 100-112; that stretch reads EEEEEEEEEEEEE. The Nuclear localization signal motif lies at 114–122; sequence PRRRVQRKR. Residues 124 to 137 show a composition bias toward basic and acidic residues; it reads NRDQDSSDDERALE. Residues Ser-129 and Ser-130 each carry the phosphoserine modification. WD repeat units lie at residues 191–230, 234–275, 281–321, 329–369, 385–424, 432–472, and 476–515; these read GHTG…PVLD, GHKS…CCKN, QHKG…PASK, EKKV…ENEN, ESKA…GAQY, RNNA…IIQF, and DKGG…STEL. Omega-N-methylarginine; by PRMT1 is present on Arg-204. The interval 558–597 is disordered; sequence HRRWREPGVGATDADSDESPSSSDTSDEEEGPDRVQCMPS.

The protein belongs to the WD repeat DCAF8 family. As to quaternary structure, interacts with DDB1, CUL4A and CUL4B. Interacts with KPNA1, KPNB1 and XPO1.

It is found in the nucleus. Its subcellular location is the cytoplasm. Its pathway is protein modification; protein ubiquitination. Functionally, may function as a substrate receptor for CUL4-DDB1 E3 ubiquitin-protein ligase complex. The sequence is that of DDB1- and CUL4-associated factor 8 (DCAF8) from Homo sapiens (Human).